The primary structure comprises 99 residues: IEILLGGDDGSLAFVPNNFTVASGEKITFKNNAGFPHNVVFDEDEIPSGVDSGKISMNEEDLLBAPGZVYZVZLTZKGSYSFYCSPHQGAGMVGKVTVN.

The region spanning I1–N99 is the Plastocyanin-like domain. Positions 37, 84, 87, and 92 each coordinate Cu cation.

The protein belongs to the plastocyanin family. Cu(2+) serves as cofactor.

It is found in the plastid. The protein resides in the chloroplast thylakoid membrane. Its function is as follows. Participates in electron transfer between P700 and the cytochrome b6-f complex in photosystem I. This chain is Plastocyanin (PETE), found in Cucumis sativus (Cucumber).